We begin with the raw amino-acid sequence, 104 residues long: NADH-quinone oxidoreductase subunit K (104 aa).

Helical transmembrane passes span 4–24, 31–51, and 67–87; these read VPAS…LFGA, VIVL…LVAF, and LFTM…LIAL.

Belongs to the complex I subunit 4L family. As to quaternary structure, NDH-1 is composed of 14 different subunits. Subunits NuoA, H, J, K, L, M, N constitute the membrane sector of the complex.

Its subcellular location is the cell membrane. It catalyses the reaction a quinone + NADH + 5 H(+)(in) = a quinol + NAD(+) + 4 H(+)(out). Functionally, NDH-1 shuttles electrons from NADH, via FMN and iron-sulfur (Fe-S) centers, to quinones in the respiratory chain. The immediate electron acceptor for the enzyme in this species is believed to be a menaquinone. Couples the redox reaction to proton translocation (for every two electrons transferred, four hydrogen ions are translocated across the cytoplasmic membrane), and thus conserves the redox energy in a proton gradient. This chain is NADH-quinone oxidoreductase subunit K, found in Bacillus cereus (strain AH187).